We begin with the raw amino-acid sequence, 294 residues long: Cytidine deaminase (294 aa).

CMP/dCMP-type deaminase domains are found at residues 48–168 (DEDA…FGPK) and 186–294 (LTGD…VLLA). 89–91 (NME) contacts substrate. Residue His102 coordinates Zn(2+). The active-site Proton donor is Glu104. Zn(2+) is bound by residues Cys129 and Cys132.

It belongs to the cytidine and deoxycytidylate deaminase family. As to quaternary structure, homodimer. The cofactor is Zn(2+).

It catalyses the reaction cytidine + H2O + H(+) = uridine + NH4(+). The catalysed reaction is 2'-deoxycytidine + H2O + H(+) = 2'-deoxyuridine + NH4(+). This enzyme scavenges exogenous and endogenous cytidine and 2'-deoxycytidine for UMP synthesis. This is Cytidine deaminase from Escherichia coli O139:H28 (strain E24377A / ETEC).